The primary structure comprises 49 residues: Large ribosomal subunit protein bL33 (49 aa).

The protein belongs to the bacterial ribosomal protein bL33 family.

This Natranaerobius thermophilus (strain ATCC BAA-1301 / DSM 18059 / JW/NM-WN-LF) protein is Large ribosomal subunit protein bL33.